A 509-amino-acid chain; its full sequence is UDP-N-acetylmuramoyl-L-alanyl-D-glutamate--2,6-diaminopimelate ligase (509 aa).

Residue Ser32 participates in UDP-N-acetyl-alpha-D-muramoyl-L-alanyl-D-glutamate binding. Residue 117–123 (GTNGKTT) participates in ATP binding. UDP-N-acetyl-alpha-D-muramoyl-L-alanyl-D-glutamate contacts are provided by residues 159–160 (TT), Ser186, Gln192, and Arg194. Lys226 bears the N6-carboxylysine mark. Residues Arg401, 425 to 428 (DNPR), Gly476, and Glu480 contribute to the meso-2,6-diaminopimelate site. Positions 425–428 (DNPR) match the Meso-diaminopimelate recognition motif motif.

It belongs to the MurCDEF family. MurE subfamily. Mg(2+) is required as a cofactor. Carboxylation is probably crucial for Mg(2+) binding and, consequently, for the gamma-phosphate positioning of ATP.

It is found in the cytoplasm. It catalyses the reaction UDP-N-acetyl-alpha-D-muramoyl-L-alanyl-D-glutamate + meso-2,6-diaminopimelate + ATP = UDP-N-acetyl-alpha-D-muramoyl-L-alanyl-gamma-D-glutamyl-meso-2,6-diaminopimelate + ADP + phosphate + H(+). The protein operates within cell wall biogenesis; peptidoglycan biosynthesis. Catalyzes the addition of meso-diaminopimelic acid to the nucleotide precursor UDP-N-acetylmuramoyl-L-alanyl-D-glutamate (UMAG) in the biosynthesis of bacterial cell-wall peptidoglycan. This Prochlorococcus marinus (strain NATL2A) protein is UDP-N-acetylmuramoyl-L-alanyl-D-glutamate--2,6-diaminopimelate ligase.